A 311-amino-acid polypeptide reads, in one-letter code: Aspartate carbamoyltransferase catalytic subunit (311 aa).

Carbamoyl phosphate-binding residues include Arg-55 and Thr-56. Lys-85 is an L-aspartate binding site. Carbamoyl phosphate is bound by residues Arg-106, His-135, and Gln-138. L-aspartate contacts are provided by Arg-168 and Arg-230. Carbamoyl phosphate is bound by residues Leu-268 and Pro-269.

It belongs to the aspartate/ornithine carbamoyltransferase superfamily. ATCase family. As to quaternary structure, heterododecamer (2C3:3R2) of six catalytic PyrB chains organized as two trimers (C3), and six regulatory PyrI chains organized as three dimers (R2).

It catalyses the reaction carbamoyl phosphate + L-aspartate = N-carbamoyl-L-aspartate + phosphate + H(+). Its pathway is pyrimidine metabolism; UMP biosynthesis via de novo pathway; (S)-dihydroorotate from bicarbonate: step 2/3. Its function is as follows. Catalyzes the condensation of carbamoyl phosphate and aspartate to form carbamoyl aspartate and inorganic phosphate, the committed step in the de novo pyrimidine nucleotide biosynthesis pathway. The chain is Aspartate carbamoyltransferase catalytic subunit from Yersinia pseudotuberculosis serotype O:1b (strain IP 31758).